The sequence spans 181 residues: Probable RNA 2'-phosphotransferase (181 aa).

The protein belongs to the KptA/TPT1 family.

Its function is as follows. Removes the 2'-phosphate from RNA via an intermediate in which the phosphate is ADP-ribosylated by NAD followed by a presumed transesterification to release the RNA and generate ADP-ribose 1''-2''-cyclic phosphate (APPR&gt;P). May function as an ADP-ribosylase. This is Probable RNA 2'-phosphotransferase from Nostoc punctiforme (strain ATCC 29133 / PCC 73102).